Consider the following 542-residue polypeptide: GPI alpha-1,2-mannosyltransferase 3 (542 aa).

The tract at residues 1-36 (MESQAADYNPASRNLHGSSGEMKLRRRKSRQYVSAQ) is disordered. A run of 8 helical transmembrane segments spans residues 52-72 (LVLFTIALRILNCFLVQTSFV), 125-145 (VQFLIWIPRLGQALLSAVADI), 213-233 (LVALACVVRPTALIPWVPLLF), 244-264 (HLTLHHFLPVGFITFSLSLII), 304-324 (GFPVVLGTHLPFFIHGCFLAP), 327-347 (LHILLLTVLWTLLVYSMLGHK), 351-371 (FIYPVLPFCMVFCGYSLAHLK), and 376-396 (AALSFLLLSNVPLAFYTGLVH). Asn480 carries N-linked (GlcNAc...) asparagine glycosylation.

It belongs to the glycosyltransferase 22 family. PIGB subfamily.

The protein localises to the endoplasmic reticulum membrane. Its pathway is glycolipid biosynthesis; glycosylphosphatidylinositol-anchor biosynthesis. Its function is as follows. Alpha-1,2-mannosyltransferase that catalyzes the transfer of the third mannose, via an alpha-1,2 bond, from a dolichol-phosphate-mannose (Dol-P-Man) to an alpha-D-Man-(1-&gt;6)-2-PEtn-alpha-D-Man-(1-&gt;4)-alpha-D-GlcN-(1-&gt;6)-(1-radyl,2-acyl-sn-glycero-3-phospho)-2-acyl-inositol intermediate to generate an alpha-D-Man-(1-&gt;2)-alpha-D-Man-(1-&gt;6)-2-PEtn-alpha-D-Man-(1-&gt;4)-alpha-D-GlcN-(1-&gt;6)-(1-radyl,2-acyl-sn-glycero-3-phospho)-2-acyl-inositol (also termed H6) and participates in the nineth step of the glycosylphosphatidylinositol-anchor biosynthesis. May also add the third mannose to an alpha-D-Man-(1-&gt;6)-alpha-D-Man-(1-&gt;4)-alpha-D-GlcN-(1-&gt;6)-(1-radyl,2-acyl-sn-glycero-3-phospho)-2-acyl-inositol (also termed H3) intermediate generating an alpha-D-Man-(1-&gt;2)-alpha-D-Man-(1-&gt;6)-alpha-D-Man-(1-&gt;4)-alpha-D-GlcN-(1-&gt;6)-(1-radyl,2-acyl-sn-glycero-3-phospho)-2-acyl-inositol (also termed H4). This Mus musculus (Mouse) protein is GPI alpha-1,2-mannosyltransferase 3.